The sequence spans 130 residues: Transcription antitermination protein NusB (130 aa).

Belongs to the NusB family.

Functionally, involved in transcription antitermination. Required for transcription of ribosomal RNA (rRNA) genes. Binds specifically to the boxA antiterminator sequence of the ribosomal RNA (rrn) operons. In Bacillus cereus (strain ATCC 10987 / NRS 248), this protein is Transcription antitermination protein NusB.